The chain runs to 127 residues: Large ribosomal subunit protein bL17 (127 aa).

The protein belongs to the bacterial ribosomal protein bL17 family. As to quaternary structure, part of the 50S ribosomal subunit. Contacts protein L32.

This Lacticaseibacillus casei (strain BL23) (Lactobacillus casei) protein is Large ribosomal subunit protein bL17.